The primary structure comprises 1131 residues: Phytochrome B1 (1131 aa).

Over residues 1–11 the composition is skewed to basic residues; the sequence is MASGSRTKHSY. Positions 1–26 are disordered; the sequence is MASGSRTKHSYHNSSQGQAQSSGTSN. The segment covering 14–25 has biased composition (low complexity); that stretch reads SSQGQAQSSGTS. Positions 229 to 408 constitute a GAF domain; sequence DIKLLCDTVV…AFGLQLNMEL (180 aa). Residue Cys334 participates in phytochromobilin binding. 2 consecutive PAS domains span residues 622–693 and 756–808; these read VARE…LRGV and DYKA…GEIF. One can recognise a Histidine kinase domain in the interval 904 to 1124; sequence YICQEVKSPL…MIILDLPMTR (221 aa).

Belongs to the phytochrome family. As to quaternary structure, homodimer. Contains one covalently linked phytochromobilin chromophore.

Functionally, regulatory photoreceptor which exists in two forms that are reversibly interconvertible by light: the Pr form that absorbs maximally in the red region of the spectrum and the Pfr form that absorbs maximally in the far-red region. Photoconversion of Pr to Pfr induces an array of morphogenic responses, whereas reconversion of Pfr to Pr cancels the induction of those responses. Pfr controls the expression of a number of nuclear genes including those encoding the small subunit of ribulose-bisphosphate carboxylase, chlorophyll A/B binding protein, protochlorophyllide reductase, rRNA, etc. It also controls the expression of its own gene(s) in a negative feedback fashion. This Solanum lycopersicum (Tomato) protein is Phytochrome B1.